Here is a 210-residue protein sequence, read N- to C-terminus: Cytochrome c biogenesis ATP-binding export protein CcmA (210 aa).

Positions 3-205 (LHLQAAGLAC…KPSGYRELNL (203 aa)) constitute an ABC transporter domain. 37–44 (GPNGSGKT) contributes to the ATP binding site.

The protein belongs to the ABC transporter superfamily. CcmA exporter (TC 3.A.1.107) family. As to quaternary structure, the complex is composed of two ATP-binding proteins (CcmA) and two transmembrane proteins (CcmB).

The protein resides in the cell inner membrane. The enzyme catalyses heme b(in) + ATP + H2O = heme b(out) + ADP + phosphate + H(+). Its function is as follows. Part of the ABC transporter complex CcmAB involved in the biogenesis of c-type cytochromes; once thought to export heme, this seems not to be the case, but its exact role is uncertain. Responsible for energy coupling to the transport system. The polypeptide is Cytochrome c biogenesis ATP-binding export protein CcmA (Pseudomonas putida (strain GB-1)).